We begin with the raw amino-acid sequence, 368 residues long: Histidinol-phosphate aminotransferase (368 aa).

N6-(pyridoxal phosphate)lysine is present on K226.

It belongs to the class-II pyridoxal-phosphate-dependent aminotransferase family. Histidinol-phosphate aminotransferase subfamily. In terms of assembly, homodimer. Pyridoxal 5'-phosphate serves as cofactor.

The enzyme catalyses L-histidinol phosphate + 2-oxoglutarate = 3-(imidazol-4-yl)-2-oxopropyl phosphate + L-glutamate. The protein operates within amino-acid biosynthesis; L-histidine biosynthesis; L-histidine from 5-phospho-alpha-D-ribose 1-diphosphate: step 7/9. The polypeptide is Histidinol-phosphate aminotransferase (Colwellia psychrerythraea (strain 34H / ATCC BAA-681) (Vibrio psychroerythus)).